Consider the following 297-residue polypeptide: uncharacterized protein (297 aa).

The protein belongs to the metallo-dependent hydrolases superfamily.

This is an uncharacterized protein from Sinorhizobium fredii (strain NBRC 101917 / NGR234).